Here is a 565-residue protein sequence, read N- to C-terminus: Protein NRT1/ PTR FAMILY 5.15 (565 aa).

2 helical membrane-spanning segments follow: residues 49-67 (FAYF…GPLG) and 80-100 (WSGT…AYLG). T104 carries the phosphothreonine modification. Transmembrane regions (helical) follow at residues 110–130 (LIYI…IMGL), 142–162 (SIWV…GQGG), 189–209 (FFNW…IVVA), 217–237 (WAFG…IFLL), 331–351 (IPIW…ITFF), 368–388 (IPAA…VPLY), 409–429 (LQRI…AALV), 454–474 (IWWF…SMVG), 490–510 (IGLS…GFLI), and 534–554 (YFYW…LFIS).

This sequence belongs to the major facilitator superfamily. Proton-dependent oligopeptide transporter (POT/PTR) (TC 2.A.17) family. In terms of tissue distribution, expressed in shoots, roots and leaves.

Its subcellular location is the membrane. This is Protein NRT1/ PTR FAMILY 5.15 (NPF5.15) from Arabidopsis thaliana (Mouse-ear cress).